A 450-amino-acid polypeptide reads, in one-letter code: tRNA modification GTPase MnmE (450 aa).

Arginine 23, glutamate 80, and arginine 123 together coordinate (6S)-5-formyl-5,6,7,8-tetrahydrofolate. Positions 219 to 372 (GLHVVLAGKP…LRQRLLQLAG (154 aa)) constitute a TrmE-type G domain. Asparagine 229 provides a ligand contact to K(+). GTP contacts are provided by residues 229–234 (NVGKSS), 248–254 (TPIAGTT), 273–276 (DTAG), and 353–355 (SAR). Serine 233 provides a ligand contact to Mg(2+). Threonine 248, isoleucine 250, and threonine 253 together coordinate K(+). Mg(2+) is bound at residue threonine 254. Lysine 450 serves as a coordination point for (6S)-5-formyl-5,6,7,8-tetrahydrofolate.

It belongs to the TRAFAC class TrmE-Era-EngA-EngB-Septin-like GTPase superfamily. TrmE GTPase family. Homodimer. Heterotetramer of two MnmE and two MnmG subunits. Requires K(+) as cofactor.

The protein resides in the cytoplasm. Functionally, exhibits a very high intrinsic GTPase hydrolysis rate. Involved in the addition of a carboxymethylaminomethyl (cmnm) group at the wobble position (U34) of certain tRNAs, forming tRNA-cmnm(5)s(2)U34. This chain is tRNA modification GTPase MnmE, found in Bordetella bronchiseptica (strain ATCC BAA-588 / NCTC 13252 / RB50) (Alcaligenes bronchisepticus).